The chain runs to 747 residues: Protein O-mannosyl-transferase 1 (747 aa).

Helical transmembrane passes span 30 to 50, 90 to 110, 121 to 141, 176 to 196, 205 to 225, 228 to 248, and 267 to 287; these read PLVV…LGLL, FGHM…NFLW, VPVW…VPMA, LLES…LKFF, SVHW…AVGI, MGIF…WHLI, and VALL…HLML. MIR domains lie at 318–381, 392–449, and 453–513; these read PLEV…VKDP, PRPV…LDIV, and SNQD…VEEH. 3 N-linked (GlcNAc...) asparagine glycosylation sites follow: asparagine 435, asparagine 471, and asparagine 539. The next 3 helical transmembrane spans lie at 597-617, 636-656, and 660-680; these read IVIW…FFWY, WVLA…PFFL, and MLFL…LPIV.

The protein belongs to the glycosyltransferase 39 family.

It localises to the endoplasmic reticulum membrane. It carries out the reaction a di-trans,poly-cis-dolichyl beta-D-mannosyl phosphate + L-seryl-[protein] = 3-O-(alpha-D-mannosyl)-L-seryl-[protein] + a di-trans,poly-cis-dolichyl phosphate + H(+). It catalyses the reaction a di-trans,poly-cis-dolichyl beta-D-mannosyl phosphate + L-threonyl-[protein] = 3-O-(alpha-D-mannosyl)-L-threonyl-[protein] + a di-trans,poly-cis-dolichyl phosphate + H(+). The protein operates within protein modification; protein glycosylation. Transfers mannosyl residues to the hydroxyl group of serine or threonine residues. Coexpression of both POMT1 and POMT2 is necessary for enzyme activity, expression of either POMT1 or POMT2 alone is insufficient. Essentially dedicated to O-mannosylation of alpha-DAG1 and few other proteins but not of cadherins and protocaherins. The protein is Protein O-mannosyl-transferase 1 (Pomt1) of Rattus norvegicus (Rat).